The primary structure comprises 155 residues: Small ribosomal subunit protein eS19B (155 aa).

The protein belongs to the eukaryotic ribosomal protein eS19 family.

The protein is Small ribosomal subunit protein eS19B (RpS19b) of Drosophila melanogaster (Fruit fly).